The chain runs to 110 residues: UPF0122 protein YlxM (110 aa).

The protein belongs to the UPF0122 family.

In terms of biological role, might take part in the signal recognition particle (SRP) pathway. This is inferred from the conservation of its genetic proximity to ftsY/ffh. May be a regulatory protein. In Bacillus subtilis (strain 168), this protein is UPF0122 protein YlxM (ylxM).